A 136-amino-acid polypeptide reads, in one-letter code: MLFSLLELVQWLGFAQLEIFLHISALLVFTVLLALKADGFAPSMSWWNVFIPFFTADGLSTYFTTIVTVRLFQDGEKRQAVLRLFWILTILSLKFIFEMLLCQKLVEQSRELWYGLIMSPIFILLQLLMIRACRVN.

4 helical membrane-spanning segments follow: residues 14–34 (FAQL…VLLA), 50–72 (FIPF…VRLF), 81–101 (VLRL…EMLL), and 112–132 (LWYG…MIRA).

It localises to the endoplasmic reticulum membrane. The protein resides in the endoplasmic reticulum-Golgi intermediate compartment. Its function is as follows. Involved in the regulation of cellular calcium homeotasis. May act as a regulator of STING-mediated inflammatory signaling in macrophages. In Xenopus laevis (African clawed frog), this protein is Transmembrane protein 203 (tmem203).